The sequence spans 159 residues: Putative phosphatidylinositol-3-phosphatase (159 aa).

Positions 1-16 (MKRPSFLPVLIGTGFG) are cleaved as a signal peptide. 4 helical membrane passes run 30–50 (LLASIIWIALYFLLPFTALLW), 54–74 (ALVVLFTFAGIWAANKLESCW), 104–124 (WYVIAAFALFRIFDIVKPLGV), and 134–154 (VGVMMDDVLAGVYSFILIAVA).

The protein localises to the membrane. It carries out the reaction a 1,2-diacyl-sn-glycero-3-phospho-(1D-myo-inositol-3-phosphate) + H2O = a 1,2-diacyl-sn-glycero-3-phospho-(1D-myo-inositol) + phosphate. Functionally, may be responsible for the conversion of phosphatidylinositol phosphate diacylglycerol (PIP-DAG) to phosphatidylinositol diacylglycerol (PI-DAG), making it a key enzyme in the inositol glycerophospholipid biosynthesis pathway. This is Putative phosphatidylinositol-3-phosphatase from Bacteroides thetaiotaomicron (strain ATCC 29148 / DSM 2079 / JCM 5827 / CCUG 10774 / NCTC 10582 / VPI-5482 / E50).